A 413-amino-acid polypeptide reads, in one-letter code: Gamma-glutamyl phosphate reductase (413 aa).

It belongs to the gamma-glutamyl phosphate reductase family.

The protein localises to the cytoplasm. It catalyses the reaction L-glutamate 5-semialdehyde + phosphate + NADP(+) = L-glutamyl 5-phosphate + NADPH + H(+). It functions in the pathway amino-acid biosynthesis; L-proline biosynthesis; L-glutamate 5-semialdehyde from L-glutamate: step 2/2. In terms of biological role, catalyzes the NADPH-dependent reduction of L-glutamate 5-phosphate into L-glutamate 5-semialdehyde and phosphate. The product spontaneously undergoes cyclization to form 1-pyrroline-5-carboxylate. This is Gamma-glutamyl phosphate reductase from Lactococcus lactis subsp. lactis (strain IL1403) (Streptococcus lactis).